The following is a 429-amino-acid chain: Enolase (429 aa).

Residue Gln-167 coordinates (2R)-2-phosphoglycerate. Glu-209 (proton donor) is an active-site residue. 3 residues coordinate Mg(2+): Asp-246, Glu-289, and Asp-316. (2R)-2-phosphoglycerate contacts are provided by Lys-341, Arg-370, Ser-371, and Lys-392. Catalysis depends on Lys-341, which acts as the Proton acceptor.

This sequence belongs to the enolase family. In terms of assembly, component of the RNA degradosome, a multiprotein complex involved in RNA processing and mRNA degradation. It depends on Mg(2+) as a cofactor.

The protein resides in the cytoplasm. It is found in the secreted. The protein localises to the cell surface. The enzyme catalyses (2R)-2-phosphoglycerate = phosphoenolpyruvate + H2O. Its pathway is carbohydrate degradation; glycolysis; pyruvate from D-glyceraldehyde 3-phosphate: step 4/5. In terms of biological role, catalyzes the reversible conversion of 2-phosphoglycerate (2-PG) into phosphoenolpyruvate (PEP). It is essential for the degradation of carbohydrates via glycolysis. The polypeptide is Enolase (Ectopseudomonas mendocina (strain ymp) (Pseudomonas mendocina)).